Here is a 252-residue protein sequence, read N- to C-terminus: Gamma carbonic anhydrase-like 1, mitochondrial (252 aa).

A mitochondrion-targeting transit peptide spans 1 to 29 (MATSIARLSRRGVTSNLIRRCFAAEAALA). Substrate contacts are provided by residues 99–101 (RGD) and 114–115 (QE). Residue H120 participates in Zn(2+) binding. Residues R148, Q160, and Y227 each coordinate substrate.

This sequence belongs to the gamma-class carbonic anhydrase family. Component of the mitochondrial oxidoreductase respiratory chain complex I; element of the extra matrix-exposed domain, which is attached to the membrane arm of this complex. Interacts with GAMMACA2.

It is found in the mitochondrion membrane. Functionally, involved in complex I assembly in mitochondria and respiration. This chain is Gamma carbonic anhydrase-like 1, mitochondrial (GAMMACAL1), found in Arabidopsis thaliana (Mouse-ear cress).